The chain runs to 250 residues: Probable 2' cyclic ADP-D-ribose synthase TcpB (250 aa).

Residues 1–46 (MSKEKQAQSKAHKAQQAISSAKSLSTQKSKMSELERATRDGAAIGK) are disordered. The interval 1–117 (MSKEKQAQSK…TASATMEAEE (117 aa)) is necessary and sufficient for phosphoinositide binding. Positions 14–23 (AQQAISSAKS) are enriched in low complexity. Residues 30-39 (KMSELERATR) are compositionally biased toward basic and acidic residues. A TIR domain is found at 117 to 250 (EEYDFFISHA…EIAKELHSLI (134 aa)). Residue E192 is part of the active site.

In terms of assembly, homodimer; may also form oligomers. Interacts with host TIRAP. Interacts with host MYD88. Interaction with host MYD88 was not confirmed by another study. Interacts with host TLR4. Abolishes the interaction of host TIRAP with TLR4.

It localises to the secreted. The protein resides in the host cell membrane. The enzyme catalyses NAD(+) + H2O = ADP-D-ribose + nicotinamide + H(+). The catalysed reaction is NAD(+) = 2'cADPR + nicotinamide + H(+). Its function is as follows. Virulence factor that interferes with host Toll-like receptor 2 (TLR2) and TLR4 signaling, resulting in the reduction of dendritic cell maturation, inhibition of pro-inflammatory cytokine secretion and impaired NF-kappa-B activation in macrophages. Interferes with host TLR4 signaling by abolishing host TLR4-TIRAP interaction (but not host TIRAP-MYD88 interaction) and its downstream signaling. Inhibits host TLR 2 induced NF-kappa-B activation and TNF (tumor necrosis factor) secretion. Binds phosphoinositide (PtdIns) via its N-terminal domain. Has NAD(+) hydrolase (NADase) activity, catalyzes cleavage of NAD(+) into ADP-D-ribose (ADPR) and nicotinamide. Also generates a cyclization variant of cyclic ADPR (cADPR), termed v-cADPR (probably 2'cADPR). This is Probable 2' cyclic ADP-D-ribose synthase TcpB from Brucella melitensis biotype 1 (strain ATCC 23456 / CCUG 17765 / NCTC 10094 / 16M).